A 518-amino-acid chain; its full sequence is 2-isopropylmalate synthase (518 aa).

Residues 5 to 269 (IIVLDTTLRD…STNVRLKELI (265 aa)) enclose the Pyruvate carboxyltransferase domain. Mn(2+)-binding residues include D14, H204, H206, and N240. A regulatory domain region spans residues 397-518 (ELDSFQVVTN…HDSQAPVSAR (122 aa)).

This sequence belongs to the alpha-IPM synthase/homocitrate synthase family. LeuA type 1 subfamily. In terms of assembly, homodimer. Requires Mn(2+) as cofactor.

It localises to the cytoplasm. It catalyses the reaction 3-methyl-2-oxobutanoate + acetyl-CoA + H2O = (2S)-2-isopropylmalate + CoA + H(+). It functions in the pathway amino-acid biosynthesis; L-leucine biosynthesis; L-leucine from 3-methyl-2-oxobutanoate: step 1/4. Its function is as follows. Catalyzes the condensation of the acetyl group of acetyl-CoA with 3-methyl-2-oxobutanoate (2-ketoisovalerate) to form 3-carboxy-3-hydroxy-4-methylpentanoate (2-isopropylmalate). In Geobacillus sp. (strain Y412MC10), this protein is 2-isopropylmalate synthase.